A 73-amino-acid polypeptide reads, in one-letter code: MQMKYLIPIFFLVLIVADHCHAFLGMIPGLIGGLISAFKGRRKRDITSQIEQYRNLQKREAELEDILANLPVY.

Residues 1–22 (MQMKYLIPIFFLVLIVADHCHA) form the signal peptide. The propeptide occupies 45 to 73 (DITSQIEQYRNLQKREAELEDILANLPVY).

The protein belongs to the non-disulfide-bridged peptide (NDBP) superfamily. Short antimicrobial peptide (group 4) family. In terms of tissue distribution, expressed by the venom gland.

It localises to the secreted. Antimicrobial peptide. Has a high antibacterial activity against the Gram-positive bacterium S.aureus (MIC=5-17.30 uM), the methicillin-resistant S.aureus (MRSA) (MIC=17.30 uM), and E.faecalis (MIC=69.23 uM). Has antifungal activity against Candida spp. and one Cryptococcus neoformans strains with MICs values ranging from 6.25 to 100 uM. Also shows an inhibitory activity on C.albicans biofilms at high concentrations. Has a moderate hemolytic potency (18% at 20 uM). Also inhibits the growth of the five cancer cell lines tested. In the model of polymicrobial sepsis, it exhibits an antibiotic effect, reducing the levels of microorganisms in the infectious focus and the inflammatory responses in the lung and cecum of septic animals. The polypeptide is Putative antimicrobial peptide clone 4 (Tityus costatus (Brazilian scorpion)).